A 273-amino-acid chain; its full sequence is Hydroxyethylthiazole kinase (273 aa).

A substrate-binding site is contributed by methionine 49. The ATP site is built by arginine 125 and threonine 171. Glycine 198 is a binding site for substrate.

This sequence belongs to the Thz kinase family. It depends on Mg(2+) as a cofactor.

It catalyses the reaction 5-(2-hydroxyethyl)-4-methylthiazole + ATP = 4-methyl-5-(2-phosphooxyethyl)-thiazole + ADP + H(+). It functions in the pathway cofactor biosynthesis; thiamine diphosphate biosynthesis; 4-methyl-5-(2-phosphoethyl)-thiazole from 5-(2-hydroxyethyl)-4-methylthiazole: step 1/1. Functionally, catalyzes the phosphorylation of the hydroxyl group of 4-methyl-5-beta-hydroxyethylthiazole (THZ). The chain is Hydroxyethylthiazole kinase from Desulforudis audaxviator (strain MP104C).